Here is a 499-residue protein sequence, read N- to C-terminus: Probable mitochondrial-processing peptidase subunit alpha-2, chloroplastic/mitochondrial (499 aa).

This sequence belongs to the peptidase M16 family. As to quaternary structure, heterodimer of alpha and beta subunits, forming the mitochondrial processing protease (MPP) in which subunit alpha is involved in substrate recognition and binding and subunit beta is the catalytic subunit. Component of the ubiquinol-cytochrome c oxidoreductase (cytochrome b-c1 complex, complex III, CIII), a multisubunit enzyme composed of 10 subunits. The complex is composed of 3 respiratory subunits cytochrome b (MT-CYB), cytochrome c1 (CYC1-1 or CYC1-2) and Rieske protein (UCR1-1 or UCR1-2), 2 core protein subunits MPPalpha1 (or MPPalpha2) and MPPB, and 5 low-molecular weight protein subunits QCR7-1 (or QCR7-2), UCRQ-1 (or UCRQ-2), QCR9, UCRY and probably QCR6-1 (or QCR6-2). The complex exists as an obligatory dimer and forms supercomplexes (SCs) in the inner mitochondrial membrane with NADH-ubiquinone oxidoreductase (complex I, CI), resulting in different assemblies (supercomplexes SCI(1)III(2) and SCI(2)III(4)). Interacts with TIM23-2.

It localises to the plastid. The protein resides in the chloroplast stroma. Its subcellular location is the mitochondrion matrix. It is found in the mitochondrion inner membrane. Substrate recognition and binding subunit of the essential mitochondrial processing protease (MPP), which cleaves the mitochondrial sequence off newly imported precursors proteins. Its function is as follows. Component of the ubiquinol-cytochrome c oxidoreductase, a multisubunit transmembrane complex that is part of the mitochondrial electron transport chain which drives oxidative phosphorylation. The respiratory chain contains 3 multisubunit complexes succinate dehydrogenase (complex II, CII), ubiquinol-cytochrome c oxidoreductase (cytochrome b-c1 complex, complex III, CIII) and cytochrome c oxidase (complex IV, CIV), that cooperate to transfer electrons derived from NADH and succinate to molecular oxygen, creating an electrochemical gradient over the inner membrane that drives transmembrane transport and the ATP synthase. The cytochrome b-c1 complex catalyzes electron transfer from ubiquinol to cytochrome c, linking this redox reaction to translocation of protons across the mitochondrial inner membrane, with protons being carried across the membrane as hydrogens on the quinol. In the process called Q cycle, 2 protons are consumed from the matrix, 4 protons are released into the intermembrane space and 2 electrons are passed to cytochrome c. The protein is Probable mitochondrial-processing peptidase subunit alpha-2, chloroplastic/mitochondrial (MPPalpha2) of Arabidopsis thaliana (Mouse-ear cress).